We begin with the raw amino-acid sequence, 340 residues long: Probable sugar phosphate/phosphate translocator At3g14410 (340 aa).

Transmembrane regions (helical) follow at residues 12–32, 44–64, 80–100, 110–130, 141–161, 163–183, 197–217, 234–254, 260–282, and 286–305; these read EFVT…QIFF, FPYP…LCFL, LEIY…TLWL, VAFA…LGVA, LLIM…ELNI, WIGV…LIFM, ISLM…PWIF, VVLT…FLVI, LTIR…LLFA, and LTII…AAYN. Residues 320-340 form a disordered region; it reads ETPGDAESIPLVSQGNTNTER. Residues 330-340 are compositionally biased toward polar residues; sequence LVSQGNTNTER.

Belongs to the TPT transporter family. TPT (TC 2.A.7.9) subfamily.

It localises to the membrane. This is Probable sugar phosphate/phosphate translocator At3g14410 from Arabidopsis thaliana (Mouse-ear cress).